A 461-amino-acid chain; its full sequence is D-phenylhydantoinase (461 aa).

3 residues coordinate a divalent metal cation: His59, His61, and Lys151. The residue at position 151 (Lys151) is an N6-carboxylysine. Residue Tyr156 participates in substrate binding. His182 and His239 together coordinate a divalent metal cation. Ser286 contributes to the substrate binding site. Residue Asp313 coordinates a divalent metal cation. Asn335 is a binding site for substrate.

This sequence belongs to the metallo-dependent hydrolases superfamily. Hydantoinase/dihydropyrimidinase family. In terms of assembly, homotetramer. Zn(2+) serves as cofactor. It depends on Ni(2+) as a cofactor. Co(2+) is required as a cofactor. The cofactor is Mn(2+). Carboxylation allows a single lysine to coordinate two divalent metal cations.

It carries out the reaction D-5-phenylhydantoin + H2O = N-carbamoyl-D-phenylglycine + H(+). Its function is as follows. Catalyzes the stereospecific hydrolysis of the cyclic amide bond of D-hydantoin derivatives with an aromatic side chains at the 5'-position. Has no activity on dihydropyrimidines. The physiological function is unknown. The sequence is that of D-phenylhydantoinase (hyuA) from Escherichia coli (strain K12).